A 31-amino-acid polypeptide reads, in one-letter code: Conotoxin Cltx-2 (31 aa).

Residues Pro-6 and Pro-31 each carry the 4-hydroxyproline modification.

Post-translationally, contains 4 disulfide bonds. As to expression, expressed by the venom duct.

The protein resides in the secreted. The chain is Conotoxin Cltx-2 from Californiconus californicus (California cone).